A 289-amino-acid chain; its full sequence is Ribosomal protein L11 methyltransferase (289 aa).

Positions 142, 163, 185, and 226 each coordinate S-adenosyl-L-methionine.

Belongs to the methyltransferase superfamily. PrmA family.

It is found in the cytoplasm. The enzyme catalyses L-lysyl-[protein] + 3 S-adenosyl-L-methionine = N(6),N(6),N(6)-trimethyl-L-lysyl-[protein] + 3 S-adenosyl-L-homocysteine + 3 H(+). Functionally, methylates ribosomal protein L11. In Legionella pneumophila subsp. pneumophila (strain Philadelphia 1 / ATCC 33152 / DSM 7513), this protein is Ribosomal protein L11 methyltransferase.